The chain runs to 475 residues: Glutamate--tRNA ligase (475 aa).

Residues 9–19 carry the 'HIGH' region motif; sequence PSPTGYLHVGG. The short motif at 240-244 is the 'KMSKS' region element; sequence KLSKR. Position 243 (lysine 243) interacts with ATP.

It belongs to the class-I aminoacyl-tRNA synthetase family. Glutamate--tRNA ligase type 1 subfamily. As to quaternary structure, monomer.

It localises to the cytoplasm. The catalysed reaction is tRNA(Glu) + L-glutamate + ATP = L-glutamyl-tRNA(Glu) + AMP + diphosphate. Catalyzes the attachment of glutamate to tRNA(Glu) in a two-step reaction: glutamate is first activated by ATP to form Glu-AMP and then transferred to the acceptor end of tRNA(Glu). The polypeptide is Glutamate--tRNA ligase (Vibrio campbellii (strain ATCC BAA-1116)).